We begin with the raw amino-acid sequence, 320 residues long: tRNA pseudouridine synthase B (320 aa).

Asp49 (nucleophile) is an active-site residue.

The protein belongs to the pseudouridine synthase TruB family. Type 1 subfamily.

The catalysed reaction is uridine(55) in tRNA = pseudouridine(55) in tRNA. In terms of biological role, responsible for synthesis of pseudouridine from uracil-55 in the psi GC loop of transfer RNAs. This chain is tRNA pseudouridine synthase B, found in Bartonella bacilliformis (strain ATCC 35685 / KC583 / Herrer 020/F12,63).